Here is a 392-residue protein sequence, read N- to C-terminus: Methylthioribose kinase (392 aa).

ATP is bound by residues N38, K53, and 107–109 (EDL). D225 lines the substrate pocket. Position 242–244 (242–244 (DPE)) interacts with ATP. R332 lines the substrate pocket.

The protein belongs to the methylthioribose kinase family. As to quaternary structure, homodimer.

The enzyme catalyses 5-(methylsulfanyl)-D-ribose + ATP = 5-(methylsulfanyl)-alpha-D-ribose 1-phosphate + ADP + H(+). The protein operates within amino-acid biosynthesis; L-methionine biosynthesis via salvage pathway; S-methyl-5-thio-alpha-D-ribose 1-phosphate from S-methyl-5'-thioadenosine (hydrolase route): step 2/2. Its function is as follows. Catalyzes the phosphorylation of methylthioribose into methylthioribose-1-phosphate. The chain is Methylthioribose kinase from Bacillus mycoides (strain KBAB4) (Bacillus weihenstephanensis).